We begin with the raw amino-acid sequence, 136 residues long: Protein PsiE homolog (136 aa).

Transmembrane regions (helical) follow at residues 15-35 (AMQAVLNLALLCLGIILVVFL), 58-78 (VEGLVVYFLYFEFIALIVKYF), 82-102 (FHFPLRYFVYIGITAIVRLII), and 108-128 (PLAVLIYSAAILILVITLWLC).

This sequence belongs to the PsiE family.

It localises to the cell inner membrane. This is Protein PsiE homolog from Klebsiella pneumoniae subsp. pneumoniae (strain ATCC 700721 / MGH 78578).